An 89-amino-acid polypeptide reads, in one-letter code: Elongation factor 1-beta (89 aa).

It belongs to the EF-1-beta/EF-1-delta family.

Functionally, promotes the exchange of GDP for GTP in EF-1-alpha/GDP, thus allowing the regeneration of EF-1-alpha/GTP that could then be used to form the ternary complex EF-1-alpha/GTP/AAtRNA. The sequence is that of Elongation factor 1-beta from Methanococcus maripaludis (strain C6 / ATCC BAA-1332).